Reading from the N-terminus, the 201-residue chain is FMN-dependent NADH:quinone oxidoreductase (201 aa).

FMN contacts are provided by residues S10, S16–S18, M96–F99, and S140–G143.

Belongs to the azoreductase type 1 family. As to quaternary structure, homodimer. FMN serves as cofactor.

It carries out the reaction 2 a quinone + NADH + H(+) = 2 a 1,4-benzosemiquinone + NAD(+). The catalysed reaction is N,N-dimethyl-1,4-phenylenediamine + anthranilate + 2 NAD(+) = 2-(4-dimethylaminophenyl)diazenylbenzoate + 2 NADH + 2 H(+). Its function is as follows. Quinone reductase that provides resistance to thiol-specific stress caused by electrophilic quinones. Also exhibits azoreductase activity. Catalyzes the reductive cleavage of the azo bond in aromatic azo compounds to the corresponding amines. The sequence is that of FMN-dependent NADH:quinone oxidoreductase from Escherichia coli O9:H4 (strain HS).